Consider the following 514-residue polypeptide: Membrane-bound lytic murein transglycosylase F (514 aa).

The first 30 residues, 1–30 (MLSNNPLITKFRELFTVALVLALLSGCQWQ), serve as a signal peptide directing secretion. Positions 31-271 (DDNLTDLEKI…QLEEKYFGHV (241 aa)) are non-LT domain. Positions 272 to 514 (GSFDYVDTRA…KTIEDPGPSQ (243 aa)) are LT domain. Residue E316 is part of the active site. Positions 482 to 514 (PVPPRQANVDGSLNNEAAISSAEKTIEDPGPSQ) are disordered. A compositionally biased stretch (polar residues) spans 490–499 (VDGSLNNEAA).

The protein in the N-terminal section; belongs to the bacterial solute-binding protein 3 family. This sequence in the C-terminal section; belongs to the transglycosylase Slt family.

It is found in the cell outer membrane. The enzyme catalyses Exolytic cleavage of the (1-&gt;4)-beta-glycosidic linkage between N-acetylmuramic acid (MurNAc) and N-acetylglucosamine (GlcNAc) residues in peptidoglycan, from either the reducing or the non-reducing ends of the peptidoglycan chains, with concomitant formation of a 1,6-anhydrobond in the MurNAc residue.. In terms of biological role, murein-degrading enzyme that degrades murein glycan strands and insoluble, high-molecular weight murein sacculi, with the concomitant formation of a 1,6-anhydromuramoyl product. Lytic transglycosylases (LTs) play an integral role in the metabolism of the peptidoglycan (PG) sacculus. Their lytic action creates space within the PG sacculus to allow for its expansion as well as for the insertion of various structures such as secretion systems and flagella. In Photobacterium profundum (strain SS9), this protein is Membrane-bound lytic murein transglycosylase F.